A 458-amino-acid chain; its full sequence is Argininosuccinate lyase (458 aa).

It belongs to the lyase 1 family. Argininosuccinate lyase subfamily.

The protein localises to the cytoplasm. The catalysed reaction is 2-(N(omega)-L-arginino)succinate = fumarate + L-arginine. It functions in the pathway amino-acid biosynthesis; L-arginine biosynthesis; L-arginine from L-ornithine and carbamoyl phosphate: step 3/3. In Salmonella newport (strain SL254), this protein is Argininosuccinate lyase.